Reading from the N-terminus, the 342-residue chain is Phosphate acyltransferase (342 aa).

The protein belongs to the PlsX family. Homodimer. Probably interacts with PlsY.

The protein localises to the cytoplasm. The enzyme catalyses a fatty acyl-[ACP] + phosphate = an acyl phosphate + holo-[ACP]. Its pathway is lipid metabolism; phospholipid metabolism. Functionally, catalyzes the reversible formation of acyl-phosphate (acyl-PO(4)) from acyl-[acyl-carrier-protein] (acyl-ACP). This enzyme utilizes acyl-ACP as fatty acyl donor, but not acyl-CoA. This chain is Phosphate acyltransferase, found in Trichormus variabilis (strain ATCC 29413 / PCC 7937) (Anabaena variabilis).